The primary structure comprises 437 residues: D-aminoacyl-tRNA deacylase (437 aa).

The protein belongs to the DtdA deacylase family. In terms of assembly, monomer. The cofactor is Zn(2+).

The enzyme catalyses a D-aminoacyl-tRNA + H2O = a tRNA + a D-alpha-amino acid + H(+). It catalyses the reaction glycyl-tRNA(Ala) + H2O = tRNA(Ala) + glycine + H(+). Functionally, D-aminoacyl-tRNA deacylase with broad substrate specificity. By recycling D-aminoacyl-tRNA to D-amino acids and free tRNA molecules, this enzyme counteracts the toxicity associated with the formation of D-aminoacyl-tRNA entities in vivo. The protein is D-aminoacyl-tRNA deacylase of Methanoculleus marisnigri (strain ATCC 35101 / DSM 1498 / JR1).